The chain runs to 347 residues: 8-amino-8-demethylriboflavin N,N-dimethyltransferase (347 aa).

S-adenosyl-L-methionine contacts are provided by residues Asp209 and 235–237 (GDF).

It belongs to the class I-like SAM-binding methyltransferase superfamily. Cation-independent O-methyltransferase family. Homodimer.

It catalyses the reaction 8-amino-8-demethylriboflavin + 2 S-adenosyl-L-methionine = roseoflavin + 2 S-adenosyl-L-homocysteine + 2 H(+). It participates in antibiotic biosynthesis. In terms of biological role, catalyzes the S-adenosyl methionine-dependent conversion of 8-amino-8-demethyl-D-riboflavin (AF) into 8-methylamino-8-demethyl-D-riboflavin (MAF) and roseoflavin (RoF), the last two steps in the biosynthesis of the antibiotic roseoflavin. The protein is 8-amino-8-demethylriboflavin N,N-dimethyltransferase of Streptomyces davaonensis (strain DSM 101723 / JCM 4913 / KCC S-0913 / 768).